The primary structure comprises 398 residues: Argininosuccinate lyase (398 aa).

It belongs to the lyase 1 family. Argininosuccinate lyase subfamily.

It localises to the cytoplasm. The enzyme catalyses 2-(N(omega)-L-arginino)succinate = fumarate + L-arginine. Its pathway is amino-acid biosynthesis; L-arginine biosynthesis; L-arginine from L-ornithine and carbamoyl phosphate: step 3/3. This is Argininosuccinate lyase from Thermotoga neapolitana (strain ATCC 49049 / DSM 4359 / NBRC 107923 / NS-E).